A 217-amino-acid chain; its full sequence is Small ribosomal subunit protein uS3c (217 aa).

The KH type-2 domain occupies 39 to 109; it reads IRNFLRTKLI…RFRITITYIP (71 aa).

It belongs to the universal ribosomal protein uS3 family. In terms of assembly, part of the 30S ribosomal subunit.

It is found in the plastid. It localises to the chloroplast. The chain is Small ribosomal subunit protein uS3c (rps3) from Chlorokybus atmophyticus (Soil alga).